The chain runs to 160 residues: Large ribosomal subunit protein eL21 (160 aa).

The protein belongs to the eukaryotic ribosomal protein eL21 family.

The protein is Large ribosomal subunit protein eL21 (rpl21) of Dictyostelium discoideum (Social amoeba).